A 280-amino-acid polypeptide reads, in one-letter code: Eukaryotic translation initiation factor 3 subunit F-1 (280 aa).

The 131-residue stretch at 8–138 (VRVHPVVLFQ…LRAYVCIQLG (131 aa)) folds into the MPN domain.

Belongs to the eIF-3 subunit F family. As to quaternary structure, component of the eukaryotic translation initiation factor 3 (eIF-3) complex. The eIF-3 complex interacts with pix.

It localises to the cytoplasm. Component of the eukaryotic translation initiation factor 3 (eIF-3) complex, which is involved in protein synthesis of a specialized repertoire of mRNAs and, together with other initiation factors, stimulates binding of mRNA and methionyl-tRNAi to the 40S ribosome. The eIF-3 complex specifically targets and initiates translation of a subset of mRNAs involved in cell proliferation. The sequence is that of Eukaryotic translation initiation factor 3 subunit F-1 from Drosophila erecta (Fruit fly).